The sequence spans 65 residues: Small ribosomal subunit protein bS21 (65 aa).

The tract at residues 45–65 is disordered; that stretch reads GRLKRSRSRRRAQRANEERNS. Over residues 48 to 57 the composition is skewed to basic residues; that stretch reads KRSRSRRRAQ.

This sequence belongs to the bacterial ribosomal protein bS21 family.

This Chlorobium phaeobacteroides (strain DSM 266 / SMG 266 / 2430) protein is Small ribosomal subunit protein bS21.